The primary structure comprises 503 residues: Arginyl-tRNA--protein transferase 1 (503 aa).

This sequence belongs to the R-transferase family.

It localises to the cytoplasm. The enzyme catalyses an N-terminal L-alpha-aminoacyl-[protein] + L-arginyl-tRNA(Arg) = an N-terminal L-arginyl-L-aminoacyl-[protein] + tRNA(Arg) + H(+). In terms of biological role, involved in the post-translational conjugation of arginine to the N-terminal aspartate or glutamate of a protein. This arginylation is required for degradation of the protein via the ubiquitin pathway. Does not arginylate cysteine residues. This Saccharomyces cerevisiae (strain ATCC 204508 / S288c) (Baker's yeast) protein is Arginyl-tRNA--protein transferase 1 (ATE1).